The chain runs to 292 residues: HTH-type transcriptional regulator BlaA (292 aa).

One can recognise an HTH lysR-type domain in the interval 5–62; the sequence is LPLNALRAFEASARHLNFTKAALELYVTQGAVSQQVRMLEERLGVILFKRLPRGLEMT. The segment at residues 22–41 is a DNA-binding region (H-T-H motif); the sequence is FTKAALELYVTQGAVSQQVR.

Belongs to the LysR transcriptional regulatory family.

In terms of biological role, positive regulator of the expression of the gene (blaB) for beta-lactamase. This is HTH-type transcriptional regulator BlaA (blaA) from Proteus vulgaris.